The primary structure comprises 951 residues: Cadmium/zinc-transporting ATPase HMA2 (951 aa).

The Cytoplasmic portion of the chain corresponds to 1–83; sequence MASKKMTKSY…VRVTGETNFK (83 aa). One can recognise an HMA domain in the interval 7–73; it reads TKSYFDVLGI…ALNQAQLEAN (67 aa). The helical transmembrane segment at 84–105 threads the bilayer; that stretch reads NKWPSPFAVVSGILLLLSFFKY. Over 106–108 the chain is Extracellular; the sequence is LYS. A helical membrane pass occupies residues 109 to 128; sequence PFRWLAVAAVVAGIYPILAK. Residues 129-135 lie on the Cytoplasmic side of the membrane; it reads AVASLAR. A helical transmembrane segment spans residues 136–156; that stretch reads FRIDINILVVVTVGATIGMQD. A topological domain (extracellular) is located at residue Y157. A helical transmembrane segment spans residues 158–178; it reads TEAAVVVFLFTIAEWLQSRAS. At 179 to 304 the chain is on the cytoplasmic side; it reads YKASAVMQSL…KTETQRFIDK (126 aa). Residues 305–327 traverse the membrane as a helical segment; sequence CSKYYTPAIILISICFVAIPFAL. At 328-335 the chain is on the extracellular side; it reads KVHNLKHW. A helical transmembrane segment spans residues 336–353; sequence VHLALVVLVSACPCGLIL. The Cytoplasmic segment spans residues 354–647; that stretch reads STPVATFCAL…KLAKRAKRKV (294 aa). D391 acts as the 4-aspartylphosphate intermediate in catalysis. Positions 592 and 596 each coordinate Mg(2+). Residues 648–667 traverse the membrane as a helical segment; sequence VENVVISITMKGAILALAFA. Residues 668–671 lie on the Extracellular side of the membrane; the sequence is GHPL. A helical membrane pass occupies residues 672 to 691; it reads IWAAVLADVGTCLLVILNSM. The Cytoplasmic segment spans residues 692-951; sequence LLLSDKHKTG…VGTLKEIVIE (260 aa). Residues 841–851 are compositionally biased toward basic and acidic residues; that stretch reads ELQQSCHDKPS. Positions 841–866 are disordered; that stretch reads ELQQSCHDKPSGLDIGTGPKHEGSST.

Belongs to the cation transport ATPase (P-type) (TC 3.A.3) family. Type IB subfamily. In terms of tissue distribution, predominantly expressed in the vascular tissues of roots, stems, and leaves. Also detected in developing anthers.

The protein resides in the cell membrane. It carries out the reaction Zn(2+)(in) + ATP + H2O = Zn(2+)(out) + ADP + phosphate + H(+). The enzyme catalyses Cd(2+)(in) + ATP + H2O = Cd(2+)(out) + ADP + phosphate + H(+). Plays an important role in zinc transport and homeostasis. Could also be involved in cadmium detoxification. This chain is Cadmium/zinc-transporting ATPase HMA2 (HMA2), found in Arabidopsis thaliana (Mouse-ear cress).